A 98-amino-acid chain; its full sequence is High mobility group nucleosome-binding domain-containing protein 3 (98 aa).

4 stretches are compositionally biased toward basic and acidic residues: residues 1–25, 39–52, 61–71, and 80–98; these read MPKR…EPTR, PEPK…KEPG, GKKDEKQEAAK, and GENK…DKNE. The segment at 1–98 is disordered; sequence MPKRKSPEGA…KTESVGDKNE (98 aa).

The protein belongs to the HMGN family.

It is found in the nucleus. This is High mobility group nucleosome-binding domain-containing protein 3 (HMGN3) from Gallus gallus (Chicken).